The primary structure comprises 151 residues: SsrA-binding protein (151 aa).

The interval 132 to 151 is disordered; the sequence is KRQTIKKRDQDREIHRKYGI.

The protein belongs to the SmpB family.

The protein resides in the cytoplasm. Required for rescue of stalled ribosomes mediated by trans-translation. Binds to transfer-messenger RNA (tmRNA), required for stable association of tmRNA with ribosomes. tmRNA and SmpB together mimic tRNA shape, replacing the anticodon stem-loop with SmpB. tmRNA is encoded by the ssrA gene; the 2 termini fold to resemble tRNA(Ala) and it encodes a 'tag peptide', a short internal open reading frame. During trans-translation Ala-aminoacylated tmRNA acts like a tRNA, entering the A-site of stalled ribosomes, displacing the stalled mRNA. The ribosome then switches to translate the ORF on the tmRNA; the nascent peptide is terminated with the 'tag peptide' encoded by the tmRNA and targeted for degradation. The ribosome is freed to recommence translation, which seems to be the essential function of trans-translation. This chain is SsrA-binding protein, found in Lactobacillus gasseri (strain ATCC 33323 / DSM 20243 / BCRC 14619 / CIP 102991 / JCM 1131 / KCTC 3163 / NCIMB 11718 / NCTC 13722 / AM63).